Here is a 314-residue protein sequence, read N- to C-terminus: Pseudouridine-5'-phosphate glycosidase (314 aa).

Residue glutamate 30 is the Proton donor of the active site. The substrate site is built by lysine 91 and valine 111. Aspartate 143 lines the Mn(2+) pocket. Residue 145-147 (SAD) participates in substrate binding. Lysine 164 acts as the Nucleophile in catalysis.

This sequence belongs to the pseudouridine-5'-phosphate glycosidase family. As to quaternary structure, homotrimer. Requires Mn(2+) as cofactor.

The catalysed reaction is D-ribose 5-phosphate + uracil = psi-UMP + H2O. In terms of biological role, catalyzes the reversible cleavage of pseudouridine 5'-phosphate (PsiMP) to ribose 5-phosphate and uracil. Functions biologically in the cleavage direction, as part of a pseudouridine degradation pathway. This Cupriavidus pinatubonensis (strain JMP 134 / LMG 1197) (Cupriavidus necator (strain JMP 134)) protein is Pseudouridine-5'-phosphate glycosidase.